Reading from the N-terminus, the 241-residue chain is 1-(5-phosphoribosyl)-5-[(5-phosphoribosylamino)methylideneamino] imidazole-4-carboxamide isomerase (241 aa).

Residue Asp-7 is the Proton acceptor of the active site. Residue Asp-129 is the Proton donor of the active site.

Belongs to the HisA/HisF family.

The protein resides in the cytoplasm. The enzyme catalyses 1-(5-phospho-beta-D-ribosyl)-5-[(5-phospho-beta-D-ribosylamino)methylideneamino]imidazole-4-carboxamide = 5-[(5-phospho-1-deoxy-D-ribulos-1-ylimino)methylamino]-1-(5-phospho-beta-D-ribosyl)imidazole-4-carboxamide. The protein operates within amino-acid biosynthesis; L-histidine biosynthesis; L-histidine from 5-phospho-alpha-D-ribose 1-diphosphate: step 4/9. The protein is 1-(5-phosphoribosyl)-5-[(5-phosphoribosylamino)methylideneamino] imidazole-4-carboxamide isomerase of Buchnera aphidicola subsp. Baizongia pistaciae (strain Bp).